We begin with the raw amino-acid sequence, 174 residues long: Shikimate kinase 2 (174 aa).

An ATP-binding site is contributed by 12 to 17 (GCGKTT). Positions 16 and 32 each coordinate Mg(2+). Substrate is bound by residues Asp-34, Arg-58, and Gly-79. The segment at 112–126 (QAAPEEDLRPTLTGK) is LID domain. Residue Arg-120 coordinates ATP. Arg-139 contacts substrate.

It belongs to the shikimate kinase family. AroL subfamily. Monomer. It depends on Mg(2+) as a cofactor.

The protein resides in the cytoplasm. It carries out the reaction shikimate + ATP = 3-phosphoshikimate + ADP + H(+). The protein operates within metabolic intermediate biosynthesis; chorismate biosynthesis; chorismate from D-erythrose 4-phosphate and phosphoenolpyruvate: step 5/7. Catalyzes the specific phosphorylation of the 3-hydroxyl group of shikimic acid using ATP as a cosubstrate. In Shigella dysenteriae serotype 1 (strain Sd197), this protein is Shikimate kinase 2.